A 787-amino-acid chain; its full sequence is MPRKTLLPLVPACDAAPRRKRLAAALLAVPGLVPAVSQAQLSGAAAEPQTFGSPWDLRLAPQLDEHPQKQGGKPATFVLADHTGGTADQDLAAKGSAEIRRGNAVVKADAIHYDQDTDMADAYGKVTVANGGTTFSGPEAHLKVEANQGFMTTPKYHFTATGGSGSAERVQLLDSERSVFTNGTYTGCQCSTNPAWYIRGSEFDFDTGADEGVARNGVLFFQGVPLFGSPWLTFPLSGERRSGFLPPTFSPFSSTNGIEVSLPYYFNIAPNRDLTITPHIISKRGIFTQATFRYLSTNYSGALTGEYLPDDRIAHRNRYAIFWQHQQNFGNGFGGYIYYNKVSDNLYPEELGSTNQFVNGIQTVYQQEAGLTYNDGPWSVLGRYQHWQTLPPAVAPYGREPQLNVKYAKYNVGGFDFGAEADYSRFRITTADQPEGDRVMFNPYVSYGLYGPGYFFVPKAQLHIASYDLTTTTGGVPDQAKRFTYSIPTLSLDTGLVFDRSVRLFGQDYIQTLEPRLFYVYTPYRNQSNAPLFDTAVSDFGLAEIFTPNTFVGNDRIADANRLTAALTTRFINPATGDERARFVIAQQYYFTDQRVTLLPTEAPATARHSDLILGASVKLGAGFASETAFQYNVDNNQLVKSSVGFGYSPGERRVINVGYRYTRQNPTLSNEPINQILMSAQWPLTRRLYAVGRLNYDLASSRVVDGLVGFQYDADCWAFGVGVQRYANGLNTSGQQNSSTRVLAQLVLKGLTSIDNGLVTAFRAGVQGYTPLPPAPAPLSRFSNYD.

An N-terminal signal peptide occupies residues 1-39 (MPRKTLLPLVPACDAAPRRKRLAAALLAVPGLVPAVSQA).

This sequence belongs to the LptD family. Component of the lipopolysaccharide transport and assembly complex. Interacts with LptE and LptA.

The protein resides in the cell outer membrane. Functionally, together with LptE, is involved in the assembly of lipopolysaccharide (LPS) at the surface of the outer membrane. In Burkholderia thailandensis (strain ATCC 700388 / DSM 13276 / CCUG 48851 / CIP 106301 / E264), this protein is LPS-assembly protein LptD.